The chain runs to 245 residues: 5'-nucleotidase SurE (245 aa).

The a divalent metal cation site is built by D8, D9, S39, and N91.

This sequence belongs to the SurE nucleotidase family. Requires a divalent metal cation as cofactor.

It localises to the cytoplasm. The enzyme catalyses a ribonucleoside 5'-phosphate + H2O = a ribonucleoside + phosphate. Functionally, nucleotidase that shows phosphatase activity on nucleoside 5'-monophosphates. The sequence is that of 5'-nucleotidase SurE from Herminiimonas arsenicoxydans.